Consider the following 61-residue polypeptide: Small ribosomal subunit protein uS14 (61 aa).

The Zn(2+) site is built by Cys-24, Cys-27, Cys-40, and Cys-43.

It belongs to the universal ribosomal protein uS14 family. Zinc-binding uS14 subfamily. Part of the 30S ribosomal subunit. Contacts proteins S3 and S10. Zn(2+) is required as a cofactor.

Its function is as follows. Binds 16S rRNA, required for the assembly of 30S particles and may also be responsible for determining the conformation of the 16S rRNA at the A site. This Helicobacter pylori (strain J99 / ATCC 700824) (Campylobacter pylori J99) protein is Small ribosomal subunit protein uS14.